The sequence spans 56 residues: Large ribosomal subunit protein bL32 (56 aa).

The interval 1–34 is disordered; sequence MAVQQNKPSRSKRGMRRAHDALKTSTISVDKTSG.

It belongs to the bacterial ribosomal protein bL32 family.

This Baumannia cicadellinicola subsp. Homalodisca coagulata protein is Large ribosomal subunit protein bL32.